The primary structure comprises 99 residues: Small integral membrane protein 14 (99 aa).

The Lumenal portion of the chain corresponds to 1–49 (MAEGGFDPCECICSHEHAMRRLINLLRQSQSYCTDTECLRELPGPSGDS). The helical transmembrane segment at 50-70 (GISITVILMAWMVIAVLLFLL) threads the bilayer. Residues 71 to 99 (RPPNLRGSSLPGKPSSPHSGQDPPAPPVD) lie on the Cytoplasmic side of the membrane. The interval 77–99 (GSSLPGKPSSPHSGQDPPAPPVD) is disordered.

The protein resides in the endoplasmic reticulum membrane. The protein is Small integral membrane protein 14 (Smim14) of Rattus norvegicus (Rat).